Here is a 258-residue protein sequence, read N- to C-terminus: 6-carboxyhexanoate--CoA ligase (258 aa).

The protein belongs to the BioW family. As to quaternary structure, homodimer. The cofactor is Mg(2+).

It catalyses the reaction heptanedioate + ATP + CoA = 6-carboxyhexanoyl-CoA + AMP + diphosphate. The protein operates within metabolic intermediate metabolism; pimeloyl-CoA biosynthesis; pimeloyl-CoA from pimelate: step 1/1. Its function is as follows. Catalyzes the transformation of pimelate into pimeloyl-CoA with concomitant hydrolysis of ATP to AMP. The polypeptide is 6-carboxyhexanoate--CoA ligase (Bacillus spizizenii (strain ATCC 23059 / NRRL B-14472 / W23) (Bacillus subtilis subsp. spizizenii)).